A 156-amino-acid chain; its full sequence is UPF0266 membrane protein YobD (156 aa).

Topologically, residues 1-5 (MTITD) are periplasmic. Residues 6–26 (LVLILFIAALLAYALYDQFIM) form a helical membrane-spanning segment. At 27 to 44 (PRRNGPTLLSIALLRRGR) the chain is on the cytoplasmic side. The helical transmembrane segment at 45 to 65 (VDSVIFVGLVAILIYNNVTSH) threads the bilayer. A topological domain (periplasmic) is located at residue glycine 66. Residues 67–87 (AQMTTWLLSALALMGFYIFWI) traverse the membrane as a helical segment. Residues 88–156 (RTPRIIFKQR…LLIENQYLKI (69 aa)) are Cytoplasmic-facing.

Belongs to the UPF0266 family.

It is found in the cell inner membrane. This is UPF0266 membrane protein YobD (yobD) from Salmonella typhimurium (strain LT2 / SGSC1412 / ATCC 700720).